Reading from the N-terminus, the 322-residue chain is NADH-quinone oxidoreductase subunit H (322 aa).

8 consecutive transmembrane segments (helical) span residues 15–35, 82–102, 114–134, 149–169, 186–206, 243–263, 265–285, and 302–322; these read ILHI…LSIL, IFIL…PTIP, IGIL…LFAG, ASAQ…GVIA, VWNV…GIAL, ISII…YFGF, GSSF…FILI, and WKIC…FILI.

This sequence belongs to the complex I subunit 1 family. As to quaternary structure, NDH-1 is composed of 13 different subunits. Subunits NuoA, H, J, K, L, M, N constitute the membrane sector of the complex.

The protein resides in the cell membrane. It carries out the reaction a quinone + NADH + 5 H(+)(in) = a quinol + NAD(+) + 4 H(+)(out). Its function is as follows. NDH-1 shuttles electrons from NADH, via FMN and iron-sulfur (Fe-S) centers, to quinones in the respiratory chain. The immediate electron acceptor for the enzyme in this species is believed to be ubiquinone. Couples the redox reaction to proton translocation (for every two electrons transferred, four hydrogen ions are translocated across the cytoplasmic membrane), and thus conserves the redox energy in a proton gradient. This subunit may bind ubiquinone. The sequence is that of NADH-quinone oxidoreductase subunit H from Buchnera aphidicola subsp. Schizaphis graminum (strain Sg).